Reading from the N-terminus, the 349-residue chain is tRNA N6-adenosine threonylcarbamoyltransferase (349 aa).

Fe cation contacts are provided by H117 and H121. Residues 140 to 144 (LVSGG), D173, G186, and N284 each bind substrate. D312 is a binding site for Fe cation.

The protein belongs to the KAE1 / TsaD family. Fe(2+) serves as cofactor.

Its subcellular location is the cytoplasm. It carries out the reaction L-threonylcarbamoyladenylate + adenosine(37) in tRNA = N(6)-L-threonylcarbamoyladenosine(37) in tRNA + AMP + H(+). In terms of biological role, required for the formation of a threonylcarbamoyl group on adenosine at position 37 (t(6)A37) in tRNAs that read codons beginning with adenine. Is involved in the transfer of the threonylcarbamoyl moiety of threonylcarbamoyl-AMP (TC-AMP) to the N6 group of A37, together with TsaE and TsaB. TsaD likely plays a direct catalytic role in this reaction. The protein is tRNA N6-adenosine threonylcarbamoyltransferase of Psychrobacter arcticus (strain DSM 17307 / VKM B-2377 / 273-4).